Consider the following 1154-residue polypeptide: DNA-directed RNA polymerase subunit beta' (1154 aa).

Zn(2+) is bound by residues C60, C62, C75, and C78. The Mg(2+) site is built by D449, D451, and D453. Zn(2+)-binding residues include C774, C848, C855, and C858.

This sequence belongs to the RNA polymerase beta' chain family. As to quaternary structure, the RNAP catalytic core consists of 2 alpha, 1 beta, 1 beta' and 1 omega subunit. When a sigma factor is associated with the core the holoenzyme is formed, which can initiate transcription. The cofactor is Mg(2+). Zn(2+) serves as cofactor.

The catalysed reaction is RNA(n) + a ribonucleoside 5'-triphosphate = RNA(n+1) + diphosphate. In terms of biological role, DNA-dependent RNA polymerase catalyzes the transcription of DNA into RNA using the four ribonucleoside triphosphates as substrates. The polypeptide is DNA-directed RNA polymerase subunit beta' (Desulforudis audaxviator (strain MP104C)).